The following is a 30-amino-acid chain: Cyclotide mden-E (30 aa).

The segment at residues 1–30 (GIPCGESCVYIPCITAAIGCSCKSKVCYRN) is a cross-link (cyclopeptide (Gly-Asn)). 3 disulfide bridges follow: Cys4/Cys20, Cys8/Cys22, and Cys13/Cys27.

It belongs to the cyclotide family. Bracelet subfamily. Post-translationally, this is a cyclic peptide.

In terms of biological role, probably participates in a plant defense mechanism. In Melicytus dentatus (Tree violet), this protein is Cyclotide mden-E.